A 98-amino-acid polypeptide reads, in one-letter code: MRGAAPRVADLNLELNDLVLPINLLSEEVLQPSDDESEAPEEELFPFRIDTCCYRCEVNVRITLFAVEFGLRALEQLIVDGKLTFCCTTCARTLRNGR.

The segment at 1–42 is E7 terminal domain; that stretch reads MRGAAPRVADLNLELNDLVLPINLLSEEVLQPSDDESEAPEE. A zinc finger lies at 53 to 90; sequence CYRCEVNVRITLFAVEFGLRALEQLIVDGKLTFCCTTC. Residues 71 to 79 carry the Nuclear export signal motif; the sequence is LRALEQLIV.

The protein belongs to the papillomaviridae E7 protein family. As to quaternary structure, homodimer. Homooligomer. Interacts with host RB1; this interaction induces dissociation of RB1-E2F1 complex thereby disrupting RB1 activity. Interacts with host EP300; this interaction represses EP300 transcriptional activity. Interacts with protein E2; this interaction inhibits E7 oncogenic activity. Interacts with host TMEM173/STING; this interaction impairs the ability of TMEM173/STING to sense cytosolic DNA and promote the production of type I interferon (IFN-alpha and IFN-beta). Post-translationally, highly phosphorylated.

Its subcellular location is the host cytoplasm. The protein localises to the host nucleus. In terms of biological role, plays a role in viral genome replication by driving entry of quiescent cells into the cell cycle. Stimulation of progression from G1 to S phase allows the virus to efficiently use the cellular DNA replicating machinery to achieve viral genome replication. E7 protein has both transforming and trans-activating activities. Induces the disassembly of the E2F1 transcription factor from RB1, with subsequent transcriptional activation of E2F1-regulated S-phase genes. Interferes with host histone deacetylation mediated by HDAC1 and HDAC2, leading to transcription activation. Also plays a role in the inhibition of both antiviral and antiproliferative functions of host interferon alpha. Interaction with host TMEM173/STING impairs the ability of TMEM173/STING to sense cytosolic DNA and promote the production of type I interferon (IFN-alpha and IFN-beta). This chain is Protein E7, found in Human papillomavirus 65.